A 428-amino-acid polypeptide reads, in one-letter code: Glutamyl-tRNA reductase (428 aa).

Substrate contacts are provided by residues 55 to 58 (TCNR), Ser-114, 119 to 121 (ETQ), and Gln-125. The active-site Nucleophile is the Cys-56. NADP(+) is bound at residue 194–199 (GAGEMI).

The protein belongs to the glutamyl-tRNA reductase family. In terms of assembly, homodimer.

It carries out the reaction (S)-4-amino-5-oxopentanoate + tRNA(Glu) + NADP(+) = L-glutamyl-tRNA(Glu) + NADPH + H(+). Its pathway is porphyrin-containing compound metabolism; protoporphyrin-IX biosynthesis; 5-aminolevulinate from L-glutamyl-tRNA(Glu): step 1/2. Functionally, catalyzes the NADPH-dependent reduction of glutamyl-tRNA(Glu) to glutamate 1-semialdehyde (GSA). This chain is Glutamyl-tRNA reductase, found in Paraburkholderia xenovorans (strain LB400).